Consider the following 243-residue polypeptide: Probable ubiquitin-conjugating enzyme E2 33 (243 aa).

In terms of domain architecture, UBC core spans 5–162; sequence ACIKRLQKEY…FPEYVEKYSQ (158 aa). The active-site Glycyl thioester intermediate is the Cys-87. The tract at residues 168–197 is disordered; sequence EEAATQQTTTSENQDFPQKDNAKVESEKSV. Positions 184–197 are enriched in basic and acidic residues; it reads PQKDNAKVESEKSV. The chain crosses the membrane as a helical span at residues 220-240; sequence LPGWIVLLLVSIVGVVMALPL.

The protein belongs to the ubiquitin-conjugating enzyme family.

It is found in the membrane. It carries out the reaction S-ubiquitinyl-[E1 ubiquitin-activating enzyme]-L-cysteine + [E2 ubiquitin-conjugating enzyme]-L-cysteine = [E1 ubiquitin-activating enzyme]-L-cysteine + S-ubiquitinyl-[E2 ubiquitin-conjugating enzyme]-L-cysteine.. The protein operates within protein modification; protein ubiquitination. Accepts the ubiquitin from the E1 complex and catalyzes its covalent attachment to other proteins. The protein is Probable ubiquitin-conjugating enzyme E2 33 (UBC33) of Arabidopsis thaliana (Mouse-ear cress).